The chain runs to 428 residues: Gamma-glutamyl phosphate reductase (428 aa).

Belongs to the gamma-glutamyl phosphate reductase family.

Its subcellular location is the cytoplasm. It carries out the reaction L-glutamate 5-semialdehyde + phosphate + NADP(+) = L-glutamyl 5-phosphate + NADPH + H(+). It participates in amino-acid biosynthesis; L-proline biosynthesis; L-glutamate 5-semialdehyde from L-glutamate: step 2/2. Catalyzes the NADPH-dependent reduction of L-glutamate 5-phosphate into L-glutamate 5-semialdehyde and phosphate. The product spontaneously undergoes cyclization to form 1-pyrroline-5-carboxylate. The polypeptide is Gamma-glutamyl phosphate reductase (Anaeromyxobacter sp. (strain Fw109-5)).